Here is a 455-residue protein sequence, read N- to C-terminus: Glutamyl-tRNA reductase (455 aa).

Residues 49–52 (TCNR), Ser109, 114–116 (ETQ), and Gln120 each bind substrate. Cys50 functions as the Nucleophile in the catalytic mechanism. Residue 189-194 (GAGKMG) participates in NADP(+) binding.

Belongs to the glutamyl-tRNA reductase family. Homodimer.

It carries out the reaction (S)-4-amino-5-oxopentanoate + tRNA(Glu) + NADP(+) = L-glutamyl-tRNA(Glu) + NADPH + H(+). The protein operates within porphyrin-containing compound metabolism; protoporphyrin-IX biosynthesis; 5-aminolevulinate from L-glutamyl-tRNA(Glu): step 1/2. In terms of biological role, catalyzes the NADPH-dependent reduction of glutamyl-tRNA(Glu) to glutamate 1-semialdehyde (GSA). This Bacillus velezensis (strain DSM 23117 / BGSC 10A6 / LMG 26770 / FZB42) (Bacillus amyloliquefaciens subsp. plantarum) protein is Glutamyl-tRNA reductase.